A 309-amino-acid polypeptide reads, in one-letter code: Methyltransferase AacuQ (309 aa).

A methyltransferase domain region spans residues 57-149 (DVGAGNGPYA…QLRPGGTFAC (93 aa)).

This sequence belongs to the methyltransferase superfamily.

It participates in secondary metabolite biosynthesis. Functionally, methyltransferase; part of the gene cluster that mediates the biosynthesis of the tetrahydroxanthone dimer secalonic acid D. The pathway begins with the synthesis of atrochrysone thioester by the polyketide synthase AacuL. The atrochrysone carboxyl ACP thioesterase AacuM then breaks the thioester bond and releases the atrochrysone carboxylic acid from AacuL. Atrochrysone carboxylic acid is decarboxylated by the decarboxylase AacuI, and oxidized by the anthrone oxygenase AacuG to yield emodin. Emodin is then reduced to emodin hydroquinone by a yet unidentified oxidoreductase. A-ring reduction by the short chain dehydrogenase AacuN, dehydration by the scytalone dehydratase-like protein AacuK and probable spontaneous re-oxidation, results in overall deoxygenation to chrysophanol. Baeyer-Villiger oxidation by the Baeyer-Villiger monooxygenase (BVMO) AacuH then yields monodictyphenone. Monodictyphenone is transformed into compounds with the tetrahydroxanthone skeleton via methylesterification by the methyltransferase AacuQ, followed by the action of the flavin-dependent monooxygenase AacuC, the isomerase AacuP, and the short chain dehydrogenase/reductase AacuF or AacuD. AacuF and AacuD should accept the same compound as a substrate but perform the ketoreduction with a different stereoselectivity, thus yielding blennolides B and A, respectively. In the final step of the biosynthesis, the cytochrome P450 monooxygenase AacuE accepts blennolide B and/or blennolide A to conduct the dimerization reaction to furnish the tetrahydroxanthone dimers, secalonic acids D, B, and F. The polypeptide is Methyltransferase AacuQ (Aspergillus aculeatus (strain ATCC 16872 / CBS 172.66 / WB 5094)).